The following is an 851-amino-acid chain: DNA mismatch repair protein MutS (851 aa).

602 to 609 (GPNMSGKS) contributes to the ATP binding site.

It belongs to the DNA mismatch repair MutS family.

In terms of biological role, this protein is involved in the repair of mismatches in DNA. It is possible that it carries out the mismatch recognition step. This protein has a weak ATPase activity. The sequence is that of DNA mismatch repair protein MutS from Streptococcus pyogenes serotype M4 (strain MGAS10750).